The sequence spans 513 residues: Light-independent protochlorophyllide reductase subunit B (513 aa).

Asp36 serves as a coordination point for [4Fe-4S] cluster. The active-site Proton donor is the Asp274. Position 409–410 (409–410) interacts with substrate; sequence GL. The interval 426–457 is disordered; the sequence is DAAGPSHHGGHSPKPQAAEPAPQAAPQPENTG. The segment covering 440-454 has biased composition (low complexity); that stretch reads PQAAEPAPQAAPQPE.

Belongs to the ChlB/BchB/BchZ family. In terms of assembly, protochlorophyllide reductase is composed of three subunits; BchL, BchN and BchB. Forms a heterotetramer of two BchB and two BchN subunits. [4Fe-4S] cluster is required as a cofactor.

It carries out the reaction chlorophyllide a + oxidized 2[4Fe-4S]-[ferredoxin] + 2 ADP + 2 phosphate = protochlorophyllide a + reduced 2[4Fe-4S]-[ferredoxin] + 2 ATP + 2 H2O. Its pathway is porphyrin-containing compound metabolism; bacteriochlorophyll biosynthesis (light-independent). Component of the dark-operative protochlorophyllide reductase (DPOR) that uses Mg-ATP and reduced ferredoxin to reduce ring D of protochlorophyllide (Pchlide) to form chlorophyllide a (Chlide). This reaction is light-independent. The NB-protein (BchN-BchB) is the catalytic component of the complex. The sequence is that of Light-independent protochlorophyllide reductase subunit B from Roseobacter denitrificans (strain ATCC 33942 / OCh 114) (Erythrobacter sp. (strain OCh 114)).